The following is a 126-amino-acid chain: Protein translocase subunit SecE (126 aa).

Helical transmembrane passes span 18–38, 40–60, and 97–117; these read LKWVATFVLLVAAVVGNYLYG, LSVVARAAGVIVLIAAALGVA, and IVLAVSIVMALALWGIDGIMV.

Belongs to the SecE/SEC61-gamma family. As to quaternary structure, component of the Sec protein translocase complex. Heterotrimer consisting of SecY, SecE and SecG subunits. The heterotrimers can form oligomers, although 1 heterotrimer is thought to be able to translocate proteins. Interacts with the ribosome. Interacts with SecDF, and other proteins may be involved. Interacts with SecA.

The protein resides in the cell inner membrane. Functionally, essential subunit of the Sec protein translocation channel SecYEG. Clamps together the 2 halves of SecY. May contact the channel plug during translocation. This is Protein translocase subunit SecE from Vibrio cholerae serotype O1 (strain ATCC 39315 / El Tor Inaba N16961).